Consider the following 288-residue polypeptide: SUR7 family protein pun1 (288 aa).

At 1-11 (MGMGFNPIKAL) the chain is on the cytoplasmic side. A helical transmembrane segment spans residues 12–32 (FTGIGTVCVGVGALLSILCII). Residues Asn33, Asn50, Asn59, Asn66, Asn122, Asn153, and Asn160 are each glycosylated (N-linked (GlcNAc...) asparagine). Topologically, residues 33–185 (NQTQHNIAFQ…GACYAMRAMY (153 aa)) are extracellular. The chain crosses the membrane as a helical span at residues 186–206 (ILGFIFFALTIVSIVISCLPF). Residues 207-210 (FGPL) are Cytoplasmic-facing. A helical membrane pass occupies residues 211-231 (FLNVFSFFATIFTFIAAVIAV). At 232-257 (ATYRIAISELEKNIEILNIPIVLGKK) the chain is on the extracellular side. Residues 258–278 (IYAYSFLSAAAGLAACILYFI) traverse the membrane as a helical segment. The Cytoplasmic portion of the chain corresponds to 279–288 (GNLTSGYSPL).

This sequence belongs to the SUR7 family.

The protein localises to the golgi apparatus membrane. Its subcellular location is the cell membrane. It is found in the cell tip. Contributes to the wild-type cellular response to nitrogen stress through signaling pathways that regulate the expression of genes involved in amino acid biosynthesis. Required for wild-type filamentous growth, cell growth, and cell-cell adhesion. In Schizosaccharomyces pombe (strain 972 / ATCC 24843) (Fission yeast), this protein is SUR7 family protein pun1 (pun1).